The chain runs to 132 residues: Small ribosomal subunit protein uS8c (132 aa).

Belongs to the universal ribosomal protein uS8 family. Part of the 30S ribosomal subunit.

It is found in the plastid. The protein localises to the chloroplast. In terms of biological role, one of the primary rRNA binding proteins, it binds directly to 16S rRNA central domain where it helps coordinate assembly of the platform of the 30S subunit. The polypeptide is Small ribosomal subunit protein uS8c (rps8) (Dioscorea elephantipes (Elephant's foot yam)).